Reading from the N-terminus, the 274-residue chain is Ribosomal RNA small subunit methyltransferase A (274 aa).

S-adenosyl-L-methionine-binding residues include His15, Leu17, Gly42, Glu64, Asp89, and Asn109.

The protein belongs to the class I-like SAM-binding methyltransferase superfamily. rRNA adenine N(6)-methyltransferase family. RsmA subfamily.

The protein resides in the cytoplasm. The enzyme catalyses adenosine(1518)/adenosine(1519) in 16S rRNA + 4 S-adenosyl-L-methionine = N(6)-dimethyladenosine(1518)/N(6)-dimethyladenosine(1519) in 16S rRNA + 4 S-adenosyl-L-homocysteine + 4 H(+). In terms of biological role, specifically dimethylates two adjacent adenosines (A1518 and A1519) in the loop of a conserved hairpin near the 3'-end of 16S rRNA in the 30S particle. May play a critical role in biogenesis of 30S subunits. This Synechococcus sp. (strain RCC307) protein is Ribosomal RNA small subunit methyltransferase A.